A 188-amino-acid chain; its full sequence is MGVDIRHNKDRKVHRTEPKSQDIYLRLLVKLYRFLARRSDAPFNKVVLKRLFMSKTNRPPLALSRLIRKMKLQGRENKIAVVVGTITDDVRILNIPKLKVCALRVTAGARRRILKAGGQVMTFDQLAVTTPKGQGTVLLSGPRKAREVYRHFGKAPGTPHSHTKPYIRSKGRKFERARGRRASRGYKN.

The interval 153–188 is disordered; sequence GKAPGTPHSHTKPYIRSKGRKFERARGRRASRGYKN. Composition is skewed to basic residues over residues 161 to 171 and 178 to 188; these read SHTKPYIRSKG and RGRRASRGYKN.

This sequence belongs to the eukaryotic ribosomal protein eL18 family. Component of the large ribosomal subunit.

The protein resides in the cytoplasm. It localises to the cytosol. The protein localises to the rough endoplasmic reticulum. Its function is as follows. Component of the large ribosomal subunit. The ribosome is a large ribonucleoprotein complex responsible for the synthesis of proteins in the cell. This is Large ribosomal subunit protein eL18 (rpl18) from Ictalurus punctatus (Channel catfish).